The sequence spans 650 residues: Glycoprotein 105 (650 aa).

The chain crosses the membrane as a helical; Signal-anchor for type II membrane protein span at residues 1–32; the sequence is MATARLGVMRPPRSCALIFLCAFSMATAPTNA. The Virion surface portion of the chain corresponds to 33 to 650; that stretch reads TAHRRAGTVK…RFPHVGIGSY (618 aa). Asparagine 52, asparagine 290, asparagine 332, asparagine 338, asparagine 359, asparagine 422, asparagine 516, and asparagine 552 each carry an N-linked (GlcNAc...) asparagine; by host glycan.

Associates with the gp82-gp105 complex. N-Glycosylated.

The protein resides in the virion membrane. This chain is Glycoprotein 105 (U96/U97/U98/U99/U100), found in Homo sapiens (Human).